The following is a 1758-amino-acid chain: RanBP2-like and GRIP domain-containing protein 3 (1758 aa).

Ser-21 is subject to Phosphoserine. One copy of the TPR 1 repeat lies at Pro-60–Gln-93. Positions Arg-176–Arg-229 form a coiled coil. Residues Gln-584–Ile-617 form a TPR 2 repeat. The segment at Gly-761–Ala-805 is disordered. Over residues Ser-779–Pro-798 the composition is skewed to low complexity. Positions Ala-805–Ala-837 form a coiled coil. In terms of domain architecture, RanBD1 1 spans His-1037–Asp-1173. 3 disordered regions span residues Val-1216–Glu-1248, Ala-1307–Phe-1335, and Asn-1581–Ser-1622. The segment covering Ile-1236 to Pro-1245 has biased composition (polar residues). The segment covering Thr-1318 to Arg-1330 has biased composition (acidic residues). A RanBD1 2 domain is found at Tyr-1334–Lys-1470. The span at Asn-1581–Glu-1594 shows a compositional bias: polar residues. Residues Ser-1595–Val-1618 show a composition bias toward basic and acidic residues. The region spanning Gln-1703–Val-1753 is the GRIP domain.

This chain is RanBP2-like and GRIP domain-containing protein 3 (RGPD3), found in Homo sapiens (Human).